The following is a 695-amino-acid chain: HIPL1 protein (695 aa).

The N-terminal stretch at 1-23 (MKLHQFLVFLFLFLSCFALSSWA) is a signal peptide. 15 N-linked (GlcNAc...) asparagine glycosylation sites follow: Asn-37, Asn-67, Asn-107, Asn-113, Asn-128, Asn-151, Asn-175, Asn-190, Asn-208, Asn-337, Asn-429, Asn-511, Asn-527, Asn-641, and Asn-648. Residue Ser-665 is the site of GPI-anchor amidated serine attachment. The propeptide at 666–695 (SSCYKHINGFHGSLVVLFVSLSLILLGLLN) is removed in mature form.

This sequence belongs to the PQQ oxidoreductase GdhB family. The cofactor is pyrroloquinoline quinone.

The protein resides in the cell membrane. In Arabidopsis thaliana (Mouse-ear cress), this protein is HIPL1 protein (HIPL1).